The chain runs to 396 residues: NAD(P)H oxidoreductase RTN4IP1, mitochondrial (396 aa).

The transit peptide at 1–40 (MEFLKTCVLRRNACTAVCFWRSKVVQKPSVRRISTTSPRS) directs the protein to the mitochondrion. The Enoyl reductase (ER) domain maps to 52–393 (GKNEVLRFTQ…RGHARGKTVI (342 aa)). Residues Ser214, Gly216, Val217, Ser237, Tyr255, Asn276, Leu300, Ala341, Phe343, His386, Ala387, and Arg388 each contribute to the NADPH site.

Belongs to the zinc-containing alcohol dehydrogenase family. Quinone oxidoreductase subfamily. As to quaternary structure, interacts with RTN4, UQCRC1 and UQCRC2. Widely expressed in mitochondria-enriched tissues. Found in heart, muscle, kidney, liver, brain and placenta.

It localises to the mitochondrion matrix. The protein localises to the mitochondrion outer membrane. The enzyme catalyses a 3-demethylubiquinone + NADH + 2 H(+) = a 3-demethylubiquinol + NAD(+). The catalysed reaction is a 3-demethylubiquinone + NADPH + 2 H(+) = a 3-demethylubiquinol + NADP(+). It catalyses the reaction 3-demethylubiquinone-10 + NADH + 2 H(+) = 3-demethylubiquinol-10 + NAD(+). It carries out the reaction 3-demethylubiquinone-10 + NADPH + 2 H(+) = 3-demethylubiquinol-10 + NADP(+). The protein operates within cofactor biosynthesis; ubiquinone biosynthesis. In terms of biological role, NAD(P)H oxidoreductase involved in the ubiquinone biosynthetic pathway. Required for the O-methyltransferase activity of COQ3. Able to catalyze the oxidoreduction of 3-demethylubiquinone into 3-demethylubiquinol in vitro. However, it is unclear if 3-demethylubiquinone constitutes a substrate in vivo. May also play a role in the regulation of retinal ganglion cell (RGC) neurite outgrowth, and hence in the development of the inner retina and optic nerve. Appears to be a potent inhibitor of regeneration following spinal cord injury. This Homo sapiens (Human) protein is NAD(P)H oxidoreductase RTN4IP1, mitochondrial.